A 495-amino-acid chain; its full sequence is Flagellin (495 aa).

The protein belongs to the bacterial flagellin family.

It localises to the secreted. The protein resides in the bacterial flagellum. Functionally, flagellin is the subunit protein which polymerizes to form the filaments of bacterial flagella. This chain is Flagellin (fliC), found in Salmonella typhimurium (strain LT2 / SGSC1412 / ATCC 700720).